Consider the following 287-residue polypeptide: 4-hydroxybenzoate octaprenyltransferase (287 aa).

6 consecutive transmembrane segments (helical) span residues 23-40 (IGSL…WLAG), 98-118 (ILFV…NKMT), 141-161 (LPQF…YAAV), 163-183 (ESLP…TVAY), 213-233 (IIIG…GNIT), and 235-255 (LGIP…YQQI).

The protein belongs to the UbiA prenyltransferase family. Mg(2+) serves as cofactor.

The protein localises to the cell inner membrane. It catalyses the reaction all-trans-octaprenyl diphosphate + 4-hydroxybenzoate = 4-hydroxy-3-(all-trans-octaprenyl)benzoate + diphosphate. Its pathway is cofactor biosynthesis; ubiquinone biosynthesis. Its function is as follows. Catalyzes the prenylation of para-hydroxybenzoate (PHB) with an all-trans polyprenyl group. Mediates the second step in the final reaction sequence of ubiquinone-8 (UQ-8) biosynthesis, which is the condensation of the polyisoprenoid side chain with PHB, generating the first membrane-bound Q intermediate 3-octaprenyl-4-hydroxybenzoate. This Pectobacterium atrosepticum (strain SCRI 1043 / ATCC BAA-672) (Erwinia carotovora subsp. atroseptica) protein is 4-hydroxybenzoate octaprenyltransferase.